The chain runs to 223 residues: MNRFLIAIDGPAGSGKSSVAKLVAQKMNMNYLDTGAMYRAVALYLHSKGLSAKDDLKKHLAEIDIEYIDGELYLNKKKVSDEIRSSEAGKLASDFATIPAVRERLTQIQRHICQNGKFVVEGRDIGTVVLPEADVKIFLTASFKERVRRRFEELKAKNMNLTMEDIADQIKIRDRQDSSRSIAPLKPAEDAIVIDTTSKDINEVADEICQIAFRRIKVEDNCC.

An ATP-binding site is contributed by 10–18; the sequence is GPAGSGKSS.

The protein belongs to the cytidylate kinase family. Type 1 subfamily.

The protein localises to the cytoplasm. It catalyses the reaction CMP + ATP = CDP + ADP. It carries out the reaction dCMP + ATP = dCDP + ADP. The polypeptide is Cytidylate kinase (Pseudothermotoga lettingae (strain ATCC BAA-301 / DSM 14385 / NBRC 107922 / TMO) (Thermotoga lettingae)).